Consider the following 349-residue polypeptide: Ferredoxin--NADP reductase 1 (349 aa).

Positions 36, 44, 48, 88, 123, 290, and 331 each coordinate FAD.

Belongs to the ferredoxin--NADP reductase type 2 family. Homodimer. The cofactor is FAD.

It carries out the reaction 2 reduced [2Fe-2S]-[ferredoxin] + NADP(+) + H(+) = 2 oxidized [2Fe-2S]-[ferredoxin] + NADPH. This Bacillus cytotoxicus (strain DSM 22905 / CIP 110041 / 391-98 / NVH 391-98) protein is Ferredoxin--NADP reductase 1.